A 1111-amino-acid chain; its full sequence is Lysylphosphatidylglycerol biosynthesis bifunctional protein LysX (1111 aa).

The tract at residues Met1–Asp612 is phosphatidylglycerol lysyltransferase. 7 helical membrane passes run Val18–Val38, Phe60–Ala80, Ile84–Leu104, Val118–Phe138, Gly152–Phe172, Val209–Phe229, and Ala308–Gly328. Positions Met613–Arg1111 are lysine--tRNA ligase. A DNA-binding region (OB) is located at residues Val674–Trp747. Mg(2+) is bound by residues Asp1023 and Glu1030.

In the N-terminal section; belongs to the LPG synthetase family. The protein in the C-terminal section; belongs to the class-II aminoacyl-tRNA synthetase family. Requires Mg(2+) as cofactor.

It is found in the cell membrane. It carries out the reaction tRNA(Lys) + L-lysine + ATP = L-lysyl-tRNA(Lys) + AMP + diphosphate. The catalysed reaction is L-lysyl-tRNA(Lys) + a 1,2-diacyl-sn-glycero-3-phospho-(1'-sn-glycerol) = a 1,2-diacyl-sn-glycero-3-phospho-1'-(3'-O-L-lysyl)-sn-glycerol + tRNA(Lys). Its function is as follows. Catalyzes the production of L-lysyl-tRNA(Lys)transfer and the transfer of a lysyl group from L-lysyl-tRNA(Lys) to membrane-bound phosphatidylglycerol (PG), which produces lysylphosphatidylglycerol (LPG), one of the components of the bacterial membrane with a positive net charge. LPG synthesis contributes to the resistance to cationic antimicrobial peptides (CAMPs) and likely protects M.tuberculosis against the CAMPs produced by competiting microorganisms (bacteriocins). In fact, the modification of anionic phosphatidylglycerol with positively charged L-lysine results in repulsion of the peptides. The protein is Lysylphosphatidylglycerol biosynthesis bifunctional protein LysX (lysX) of Mycobacterium sp. (strain JLS).